The chain runs to 92 residues: Small ribosomal subunit protein uS19c (92 aa).

This sequence belongs to the universal ribosomal protein uS19 family.

The protein localises to the plastid. It localises to the cyanelle. Its function is as follows. Protein S19 forms a complex with S13 that binds strongly to the 16S ribosomal RNA. This is Small ribosomal subunit protein uS19c (rps19) from Cyanophora paradoxa.